We begin with the raw amino-acid sequence, 266 residues long: Thymidylate synthase (266 aa).

Residues R20 and 129–130 (RR) each bind dUMP. Catalysis depends on C149, which acts as the Nucleophile. Residues 169 to 172 (RSCD), N180, and 210 to 212 (HVY) each bind dUMP. Residue D172 participates in (6R)-5,10-methylene-5,6,7,8-tetrahydrofolate binding. (6R)-5,10-methylene-5,6,7,8-tetrahydrofolate is bound at residue A265.

Belongs to the thymidylate synthase family. Bacterial-type ThyA subfamily. As to quaternary structure, homodimer.

It localises to the cytoplasm. It catalyses the reaction dUMP + (6R)-5,10-methylene-5,6,7,8-tetrahydrofolate = 7,8-dihydrofolate + dTMP. Its pathway is pyrimidine metabolism; dTTP biosynthesis. Its function is as follows. Catalyzes the reductive methylation of 2'-deoxyuridine-5'-monophosphate (dUMP) to 2'-deoxythymidine-5'-monophosphate (dTMP) while utilizing 5,10-methylenetetrahydrofolate (mTHF) as the methyl donor and reductant in the reaction, yielding dihydrofolate (DHF) as a by-product. This enzymatic reaction provides an intracellular de novo source of dTMP, an essential precursor for DNA biosynthesis. This Bifidobacterium longum (strain NCC 2705) protein is Thymidylate synthase.